A 98-amino-acid polypeptide reads, in one-letter code: Large ribosomal subunit protein bL27 (98 aa).

Positions 1-22 are disordered; sequence MAHKKGTGSTRNGRDSNAQRLG. The span at 7-19 shows a compositional bias: polar residues; sequence TGSTRNGRDSNAQ.

The protein belongs to the bacterial ribosomal protein bL27 family.

This is Large ribosomal subunit protein bL27 from Nostoc punctiforme (strain ATCC 29133 / PCC 73102).